Here is a 228-residue protein sequence, read N- to C-terminus: L-ribulose-5-phosphate 4-epimerase UlaF (228 aa).

Substrate contacts are provided by residues glycine 26–asparagine 27, serine 43–glycine 44, and serine 72–serine 73. Residues aspartate 74, histidine 93, and histidine 95 each contribute to the Zn(2+) site. Aspartate 118 (proton donor/acceptor) is an active-site residue. Histidine 167 serves as a coordination point for Zn(2+). Catalysis depends on tyrosine 225, which acts as the Proton donor/acceptor.

The protein belongs to the aldolase class II family. AraD/FucA subfamily. Zn(2+) serves as cofactor.

The enzyme catalyses L-ribulose 5-phosphate = D-xylulose 5-phosphate. The protein operates within cofactor degradation; L-ascorbate degradation; D-xylulose 5-phosphate from L-ascorbate: step 4/4. Functionally, catalyzes the isomerization of L-ribulose 5-phosphate to D-xylulose 5-phosphate. Is involved in the anaerobic L-ascorbate utilization. The sequence is that of L-ribulose-5-phosphate 4-epimerase UlaF from Salmonella paratyphi B (strain ATCC BAA-1250 / SPB7).